A 396-amino-acid chain; its full sequence is S-adenosylmethionine synthase (396 aa).

His-16 is a binding site for ATP. Asp-18 serves as a coordination point for Mg(2+). Residue Glu-44 coordinates K(+). 2 residues coordinate L-methionine: Glu-57 and Gln-100. Positions 100–110 are flexible loop; sequence QSQDIARGVDN. ATP is bound by residues 162–164, 228–229, Asp-237, 243–244, Ala-260, and Lys-264; these read DGK, RF, and RK. Asp-237 provides a ligand contact to L-methionine. Lys-268 is a binding site for L-methionine.

The protein belongs to the AdoMet synthase family. In terms of assembly, homotetramer; dimer of dimers. It depends on Mg(2+) as a cofactor. The cofactor is K(+).

It is found in the cytoplasm. It carries out the reaction L-methionine + ATP + H2O = S-adenosyl-L-methionine + phosphate + diphosphate. The protein operates within amino-acid biosynthesis; S-adenosyl-L-methionine biosynthesis; S-adenosyl-L-methionine from L-methionine: step 1/1. Catalyzes the formation of S-adenosylmethionine (AdoMet) from methionine and ATP. The overall synthetic reaction is composed of two sequential steps, AdoMet formation and the subsequent tripolyphosphate hydrolysis which occurs prior to release of AdoMet from the enzyme. This is S-adenosylmethionine synthase from Myxococcus xanthus (strain DK1622).